The chain runs to 89 residues: MSRKCPLTGKRPRRGNSYTIRGIAKKKKGIGLKVTGKTPRCFFPNMVTKRLWSTEENKFLKLKISASALRLINKLGLEKVIARAKNKSL.

It belongs to the bacterial ribosomal protein bL28 family.

This chain is Large ribosomal subunit protein bL28, found in Chlamydia abortus (strain DSM 27085 / S26/3) (Chlamydophila abortus).